Here is a 776-residue protein sequence, read N- to C-terminus: Angiomotin-like protein 2 (776 aa).

Residues 41–88 (GGAGAGGTGSPQASAEILAPEDTQVLQQATRQEPQGQEHQGGESHLAE) form a disordered region. The required for interaction with CDH5 stretch occupies residues 101–307 (GEELPTYEEA…STQTSSAPSG (207 aa)). Y107 carries the post-translational modification Phosphotyrosine. 3 disordered regions span residues 119 to 142 (AQQAGPRPHVGDRDPRGAPGGHRS), 169 to 215 (RNGA…QYPH), and 283 to 309 (GPLGALSPPEVEGPASTQTSSAPSGSA). Residues 177–192 (HMSSSHSFPQLARNQQ) show a composition bias toward polar residues. Over residues 196 to 213 (PRGPPAEGPEPRGPPPQY) the composition is skewed to pro residues. Positions 220–307 (HETATAVTDP…STQTSSAPSG (88 aa)) are required for interaction with CDH1. Positions 297–306 (ASTQTSSAPS) are enriched in polar residues. 2 coiled-coil regions span residues 314 to 509 (METL…LELR) and 543 to 570 (ALRLSEQLREKEEQILALEADMTKWEQK). Glycyl lysine isopeptide (Lys-Gly) (interchain with G-Cter in ubiquitin) cross-links involve residues K347 and K408. Disordered regions lie at residues 591–620 (QRDTTLIRHSPQPSPSSSFNEGLLTGGHRH) and 677–743 (TQGW…LDPD). A compositionally biased stretch (polar residues) spans 678–687 (QGWQSLSSSE). A phosphoserine mark is found at S756 and S759. A PDZ-binding motif is present at residues 773–776 (EILI).

This sequence belongs to the angiomotin family. In terms of assembly, part of a complex composed of AMOTL2, MAGI1 and CDH5, within the complex AMOTL2 acts as a scaffold protein for the interaction of MAGI1 with CDH5. The complex is required for coupling actin fibers to cell junctions in endothelial cells. Within the complex AMOTL2 (via its N-terminus) interacts with CDH5. Interacts (via N-terminus) with MAGI1. Interacts (via N-terminus) with ACTB; the interaction facilitates binding of cell junction complexes to actin fibers in endothelial cells. Interacts with CDH1; the interaction may facilitate binding of radial actin fibers to cell junction complexes. Interacts with SRC. Interacts with YAP1; the interaction is required for ubiquitination of AMOTL2 and localization of YAP1 to tight junctions. Interacts with WWP1; the interaction facilitates WWP1 interaction with the Crumbs complex and subsequent WWP1 translocation to the plasma membrane. WPP1 interaction with the Crumbs complex promotes WPP1 monoubiquitination of AMOTL2 which subsequently activates the Hippo signaling pathway. When ubiquitinated interacts with LATS2 (via UBA domain); the interaction promotes LATS2 phosphorylation of YAP1. Interacts (via PPXY motif) with WWTR1/TAZ (via WW domain); the interaction promotes WWTR1/TAZ localization to the cytoplasm and thereby inhibition of its transcriptional properties. Interacts with PHLDB2; interaction may facilitate PHLDB2 localization to the myotube podosome cortex that surrounds the core. Post-translationally, monoubiquitinated at Lys-347 and Lys-408 by Crumbs complex-bound WWP1. De-ubiquitinated at Lys-347 and Lys-408 by USP9X; the interaction may be promoted by cell contact inhibition. Deubiquitination of AMOTL2 negatively regulates Hippo signaling activation. Phosphorylation at Tyr-107 is necessary for efficient binding to SRC and synergistically functioning with SRC to activate the downstream MAPK pathway.

It localises to the recycling endosome. Its subcellular location is the cytoplasm. The protein resides in the cell projection. The protein localises to the podosome. It is found in the cell junction. Functionally, regulates the translocation of phosphorylated SRC to peripheral cell-matrix adhesion sites. Required for proper architecture of actin filaments. Plays a role in coupling actin fibers to cell junctions in endothelial cells and is therefore required for correct endothelial cell morphology via facilitating transcellular transmission of mechanical force resulting in endothelial cell elongation. Required for the anchoring of radial actin fibers to CDH1 junction complexes at the cell membrane which facilitates organization of radial actin fiber structure and cellular response to contractile forces. This contributes to maintenance of cell area, size, shape, epithelial sheet organization and trophectoderm cell properties that facilitate blastocyst zona hatching. Inhibits the Wnt/beta-catenin signaling pathway, probably by recruiting CTNNB1 to recycling endosomes and hence preventing its translocation to the nucleus. Participates in angiogenesis. Activates the Hippo signaling pathway in response to cell contact inhibition via interaction with and ubiquitination by Crumbs complex-bound WWP1. Ubiquitinated AMOTL2 then interacts with LATS2 which in turn phosphorylates YAP1, excluding it from the nucleus and localizing it to the cytoplasm and tight junctions, therefore ultimately repressing YAP1-driven transcription of target genes. Acts to inhibit WWTR1/TAZ transcriptional coactivator activity via sequestering WWTR1/TAZ in the cytoplasm and at tight junctions. Regulates the size and protein composition of the podosome cortex and core at myofibril neuromuscular junctions. Selectively promotes FGF-induced MAPK activation through SRC. May play a role in the polarity, proliferation and migration of endothelial cells. This Canis lupus familiaris (Dog) protein is Angiomotin-like protein 2.